We begin with the raw amino-acid sequence, 236 residues long: UPF0173 metal-dependent hydrolase AZC_2841 (236 aa).

The protein belongs to the UPF0173 family.

The chain is UPF0173 metal-dependent hydrolase AZC_2841 from Azorhizobium caulinodans (strain ATCC 43989 / DSM 5975 / JCM 20966 / LMG 6465 / NBRC 14845 / NCIMB 13405 / ORS 571).